We begin with the raw amino-acid sequence, 466 residues long: Methylenomycin A resistance protein (466 aa).

Helical transmembrane passes span 16–36, 56–76, 83–103, 113–133, 146–166, 168–188, 203–223, 234–254, 276–296, 305–325, 337–357, 367–387, 409–429, and 434–454; these read ISVL…VTVV, WVVD…GALA, TIYI…AASI, LIQG…LAAS, LWAA…GVLV, LAGW…ALIS, VNII…YALI, VILV…LREI, FIGF…SLFL, FMAG…NLLF, LMFV…VLIS, VLMS…TTVI, IGAL…ATWY, and FAFL…WLFL.

This sequence belongs to the major facilitator superfamily. EmrB family.

Its subcellular location is the cell membrane. Its function is as follows. Resistance to the epoxide antibiotic methylenomycin. In Bacillus subtilis (strain 168), this protein is Methylenomycin A resistance protein (mmr).